Consider the following 222-residue polypeptide: Small ribosomal subunit protein uS3 (222 aa).

Positions 38–106 (IRKFISEKLA…NVHINIVEIK (69 aa)) constitute a KH type-2 domain.

It belongs to the universal ribosomal protein uS3 family. As to quaternary structure, part of the 30S ribosomal subunit. Forms a tight complex with proteins S10 and S14.

Binds the lower part of the 30S subunit head. Binds mRNA in the 70S ribosome, positioning it for translation. This chain is Small ribosomal subunit protein uS3, found in Lactobacillus johnsonii (strain CNCM I-12250 / La1 / NCC 533).